The following is a 76-amino-acid chain: Large ribosomal subunit protein bL31 (76 aa).

This sequence belongs to the bacterial ribosomal protein bL31 family. Type A subfamily. As to quaternary structure, part of the 50S ribosomal subunit.

In terms of biological role, binds the 23S rRNA. This is Large ribosomal subunit protein bL31 (rpmE) from Pelagibacter ubique (strain HTCC1062).